A 30-amino-acid polypeptide reads, in one-letter code: Dendrotoxin B (30 aa).

A disulfide bridge connects residues cysteine 3 and cysteine 22.

Belongs to the three-finger toxin family. Short-chain subfamily. Orphan group XI sub-subfamily. In terms of processing, contains 4 disulfide bonds. In terms of tissue distribution, expressed by the venom gland.

It is found in the secreted. Functionally, blocks voltage-gated potassium channels (Kv). This is the slowly inactivating phase of potassium efflux which is blocked by this toxin. The protein is Dendrotoxin B of Dendroaspis angusticeps (Eastern green mamba).